Consider the following 478-residue polypeptide: MLO-like protein 13 (478 aa).

Topologically, residues 1-10 are extracellular; it reads MAEARSGSLE. A helical membrane pass occupies residues 11 to 31; it reads YTPTWVVAFICFIIVLLSLLA. Residues 32 to 60 lie on the Cytoplasmic side of the membrane; sequence ERGLHHLGKCLKRRQQDALFEALQKLKEE. The helical transmembrane segment at 61 to 81 threads the bilayer; the sequence is LMLLGFISLMLTVSQAAIRHI. Residues 82-145 are Extracellular-facing; that stretch reads CVPPALVNNM…VSVEALHQLH (64 aa). Residues 146-166 traverse the membrane as a helical segment; the sequence is IFIFVLAVFHVIFCASTMVLG. Residues 167–276 lie on the Cytoplasmic side of the membrane; the sequence is GARIQQWKHW…LRTLEIDFKK (110 aa). 2 helical membrane passes run 277–297 and 298–318; these read VVSISWYLWLFVVVFLLLNVG and GWNTYFWLSFLPLILLLMVGA. Residues 319–360 are Cytoplasmic-facing; sequence KLEYIISSLALDVSEKRSRAEEAVITPSDELFWFHRPGIVLQ. Residues 361–381 form a helical membrane-spanning segment; it reads LIHFILFQNSFEIAFFFWILF. At 382–400 the chain is on the extracellular side; that stretch reads TYGIHSCIMEKLGYLIPRL. Residues 401 to 421 traverse the membrane as a helical segment; it reads VMGVLVQVLCSYSTLPLYALV. Topologically, residues 422–478 are cytoplasmic; that stretch reads TQMGSKFKKGIFDNVVQSTLEGWLEDTRNRGESTSEAHRIEMQPTTPESYNVQSENP. Residues 435–456 are calmodulin-binding; that stretch reads NVVQSTLEGWLEDTRNRGESTS. Positions 449–462 are enriched in basic and acidic residues; sequence RNRGESTSEAHRIE. Residues 449–478 are disordered; it reads RNRGESTSEAHRIEMQPTTPESYNVQSENP. The span at 464–478 shows a compositional bias: polar residues; the sequence is QPTTPESYNVQSENP.

It belongs to the MLO family.

Its subcellular location is the membrane. In terms of biological role, may be involved in modulation of pathogen defense and leaf cell death. Activity seems to be regulated by Ca(2+)-dependent calmodulin binding and seems not to require heterotrimeric G proteins. This Arabidopsis thaliana (Mouse-ear cress) protein is MLO-like protein 13 (MLO13).